Reading from the N-terminus, the 284-residue chain is 4-diphosphocytidyl-2-C-methyl-D-erythritol kinase (284 aa).

Lysine 14 is an active-site residue. Residue 97–107 coordinates ATP; it reads PMGGGLGGGSS. The active site involves aspartate 139.

Belongs to the GHMP kinase family. IspE subfamily.

The enzyme catalyses 4-CDP-2-C-methyl-D-erythritol + ATP = 4-CDP-2-C-methyl-D-erythritol 2-phosphate + ADP + H(+). Its pathway is isoprenoid biosynthesis; isopentenyl diphosphate biosynthesis via DXP pathway; isopentenyl diphosphate from 1-deoxy-D-xylulose 5-phosphate: step 3/6. Functionally, catalyzes the phosphorylation of the position 2 hydroxy group of 4-diphosphocytidyl-2C-methyl-D-erythritol. In Psychromonas ingrahamii (strain DSM 17664 / CCUG 51855 / 37), this protein is 4-diphosphocytidyl-2-C-methyl-D-erythritol kinase.